Here is a 159-residue protein sequence, read N- to C-terminus: Ribosomal RNA large subunit methyltransferase H (159 aa).

S-adenosyl-L-methionine contacts are provided by residues G108 and 127–132; that span reads FGKLTM.

This sequence belongs to the RNA methyltransferase RlmH family. In terms of assembly, homodimer.

Its subcellular location is the cytoplasm. The catalysed reaction is pseudouridine(1915) in 23S rRNA + S-adenosyl-L-methionine = N(3)-methylpseudouridine(1915) in 23S rRNA + S-adenosyl-L-homocysteine + H(+). In terms of biological role, specifically methylates the pseudouridine at position 1915 (m3Psi1915) in 23S rRNA. The polypeptide is Ribosomal RNA large subunit methyltransferase H (Lactobacillus acidophilus (strain ATCC 700396 / NCK56 / N2 / NCFM)).